The primary structure comprises 187 residues: Aminodeoxychorismate synthase component 2 (187 aa).

Residues 1–187 (MILLIDNYDS…HQLLANFLNR (187 aa)) form the Glutamine amidotransferase type-1 domain. Catalysis depends on residues cysteine 79, histidine 168, and glutamate 170.

As to quaternary structure, monomer. Heterodimer consisting of two non-identical subunits: a glutamine amidotransferase subunit (PabA) and a aminodeoxychorismate synthase subunit (PabB).

The catalysed reaction is chorismate + L-glutamine = 4-amino-4-deoxychorismate + L-glutamate. It functions in the pathway cofactor biosynthesis; tetrahydrofolate biosynthesis; 4-aminobenzoate from chorismate: step 1/2. Functionally, part of a heterodimeric complex that catalyzes the two-step biosynthesis of 4-amino-4-deoxychorismate (ADC), a precursor of p-aminobenzoate (PABA) and tetrahydrofolate. In the first step, a glutamine amidotransferase (PabA) generates ammonia as a substrate that, along with chorismate, is used in the second step, catalyzed by aminodeoxychorismate synthase (PabB) to produce ADC. PabA converts glutamine into glutamate only in the presence of stoichiometric amounts of PabB. The protein is Aminodeoxychorismate synthase component 2 (pabA) of Klebsiella aerogenes (Enterobacter aerogenes).